A 420-amino-acid polypeptide reads, in one-letter code: Protein disulfide isomerase Creld1 (420 aa).

Positions 1–29 (MAPQPLRGLVPFLLWCLSLFLSLPGPVWL) are cleaved as a signal peptide. Over 30–362 (QPSPPPHSAP…GFFAEMTEDE (333 aa)) the chain is Extracellular. Positions 46-49 (CHTC) match the CXXC motif. Disulfide bonds link Cys-46–Cys-49, Cys-155–Cys-169, Cys-163–Cys-181, and Cys-183–Cys-192. One can recognise an EGF-like 1 domain in the interval 153–193 (LPCPGGTERPCGGYGQCEGEGTRGGSGHCDCQAGYGGEACG). N-linked (GlcNAc...) asparagine glycosylation occurs at Asn-205. FU repeat units lie at residues 208–255 (HLVC…EQAT) and 268–315 (SYEC…VVCP). The CXXC motif lies at 278–281 (CLGC). 4 cysteine pairs are disulfide-bonded: Cys-278/Cys-281, Cys-309/Cys-321, Cys-314/Cys-330, and Cys-332/Cys-343. The 38-residue stretch at 305 to 342 (DVDECETVVCPGENEQCENTEGSYRCVCAEGFRQEDGI) folds into the EGF-like 2; calcium-binding domain. The helical transmembrane segment at 363 to 383 (MVVLQQMFFGVIICALATLAA) threads the bilayer. Lys-384 is a topological domain (cytoplasmic). A helical transmembrane segment spans residues 385–405 (GDLVFTAIFIGAVAAMTGYWL). At 406–420 (SERSDRVLEGFIKGR) the chain is on the extracellular side.

The protein belongs to the CRELD family.

It localises to the membrane. It carries out the reaction Catalyzes the rearrangement of -S-S- bonds in proteins.. Its function is as follows. Protein disulfide isomerase. Promotes the localization of acetylcholine receptors (AChRs) to the plasma membrane. This is Protein disulfide isomerase Creld1 (Creld1) from Rattus norvegicus (Rat).